The sequence spans 335 residues: Fructokinase-2 (335 aa).

This sequence belongs to the carbohydrate kinase PfkB family. As to expression, expressed in roots, at higher levels in stems, and hardly detectable in leaves.

The catalysed reaction is D-fructose + ATP = D-fructose 6-phosphate + ADP + H(+). It participates in glycan biosynthesis; starch biosynthesis. Its activity is regulated as follows. Inhibited at high fructose. In terms of biological role, may play an important role in maintaining the flux of carbon towards starch formation. May also be involved in a sugar-sensing pathway. The chain is Fructokinase-2 (FRK2) from Zea mays (Maize).